Here is a 166-residue protein sequence, read N- to C-terminus: Ubiquitin-conjugating enzyme E2 13 (166 aa).

The UBC core domain maps to 4–164; it reads QACLLLQKQL…VSRCVRKSQE (161 aa). Catalysis depends on Cys89, which acts as the Glycyl thioester intermediate.

Belongs to the ubiquitin-conjugating enzyme family.

The catalysed reaction is S-ubiquitinyl-[E1 ubiquitin-activating enzyme]-L-cysteine + [E2 ubiquitin-conjugating enzyme]-L-cysteine = [E1 ubiquitin-activating enzyme]-L-cysteine + S-ubiquitinyl-[E2 ubiquitin-conjugating enzyme]-L-cysteine.. It participates in protein modification; protein ubiquitination. In terms of biological role, accepts the ubiquitin from the E1 complex and catalyzes its covalent attachment to other proteins. Involved in the formation of multiubiquitin chains. Signal the protein for selective degradation. In Arabidopsis thaliana (Mouse-ear cress), this protein is Ubiquitin-conjugating enzyme E2 13 (UBC13).